A 362-amino-acid chain; its full sequence is 3-ketodihydrosphingosine reductase gsl-3 (362 aa).

L55 provides a ligand contact to NADP(+). Residues G58, S60, G62, and R83 each coordinate NADPH. Residues 58-62 (GASEG) carry the GXSXG motif. N84 is a binding site for NADP(+). Residues R87 and D113 each coordinate NADPH. NADP(+)-binding residues include D113, R176, Y216, K220, I252, and S254. The Proton acceptor role is filled by Y216. K220 serves as the catalytic Lowers pKa of active site Tyr. A helical membrane pass occupies residues 318 to 338 (NNWVLDTLMGWLIPIIYFFVL).

Belongs to the short-chain dehydrogenases/reductases (SDR) family.

It localises to the endoplasmic reticulum membrane. It catalyses the reaction sphinganine + NADP(+) = 3-oxosphinganine + NADPH + H(+). The protein operates within lipid metabolism; sphingolipid metabolism. Its function is as follows. Catalyzes the reduction of 3'-oxosphinganine (3-ketodihydrosphingosine/KDS) to sphinganine (dihydrosphingosine/DHS), the second step of de novo sphingolipid biosynthesis. This is 3-ketodihydrosphingosine reductase gsl-3 (gsl-3) from Neurospora crassa (strain ATCC 24698 / 74-OR23-1A / CBS 708.71 / DSM 1257 / FGSC 987).